The chain runs to 617 residues: Probable Xaa-Pro aminopeptidase P (617 aa).

Mn(2+) contacts are provided by Asp414, Asp425, Glu523, and Glu537.

It belongs to the peptidase M24B family. It depends on Mn(2+) as a cofactor.

It carries out the reaction Release of any N-terminal amino acid, including proline, that is linked to proline, even from a dipeptide or tripeptide.. Its function is as follows. Catalyzes the removal of a penultimate prolyl residue from the N-termini of peptides. In Ajellomyces capsulatus (strain NAm1 / WU24) (Darling's disease fungus), this protein is Probable Xaa-Pro aminopeptidase P (AMPP).